A 368-amino-acid polypeptide reads, in one-letter code: MYKILLADDERIILDGMAGIIEWESLGASLIGKAQNGHEAYEKIVHKQPHIVITDVKMPGMDGLELIKKVSAVSPSVQFIVLSGFGEFEYAKEAMKYGVKHYLLKPCNEQQIISSLEEIIAELKRQDVHKKKTAHLKHELDHIRSFAADQYLEGLIAGVAQLSPPPSLAGKKIRLLILKGEQSIDAAAREALGSALTAVCSSGEWTVLAVEENAAEKVAEVFADRKMAISQAGELRHAGQLFRDTAEASGDLHGSAVISKMIRLIADELGNPNLSLKWAAKDMLFMNPDYLGKLFKQETGEKFSQYVTRVRLEHAMKQMKIRRDVSVSEIAEEIGFGDNPKYFSLVFKKYTGLTPSEFRRKQGGASAG.

The Response regulatory domain maps to 3–120 (KILLADDERI…QIISSLEEII (118 aa)). Asp55 carries the post-translational modification 4-aspartylphosphate. One can recognise an HTH araC/xylS-type domain in the interval 259–361 (SKMIRLIADE…GLTPSEFRRK (103 aa)). DNA-binding regions (H-T-H motif) lie at residues 278–299 (WAAK…KQET) and 327–351 (VSEI…KKYT).

In terms of processing, phosphorylated by YesM.

The protein localises to the cytoplasm. Functionally, member of the two-component regulatory system YesM/YesN. This is an uncharacterized protein from Bacillus subtilis (strain 168).